The sequence spans 393 residues: MPKDDHTGATADRTAQPTGTGKQPLVPGQPGAAPVQPGRVNFFTRIALSQRLHEIFERLPLMNRVTRREGEALFDIVSGFVQSQVLLAIVEFRVLHILAGASWPLPQLAERTGLAEDRLAVLMQAAAALKLVKFRRGLWQLAPRGAAFITVPGLEAMVRHHPVLYRDLADPVAFLKGDIEPELAGFWPYVFGPLAQEDAGLAERYSQLMADSQRVVADDTLRLVDLRDAKRVMDVGGGTGAFLRVVAKLYPELPLTLFDLPHVLSVADRFSPKLDFAPGSFRDDPIPQGADVITLVRVLYDHPDSVVEPLLAKVHAALPPGGRLIISEAMAGGAKPDRACDVYFAFYTMAMSSGRTRSPEEIKQMLEKAGFTKVSKPRTLRPFITSVIEAERG.

The tract at residues 1 to 36 (MPKDDHTGATADRTAQPTGTGKQPLVPGQPGAAPVQ) is disordered. The span at 26–36 (VPGQPGAAPVQ) shows a compositional bias: low complexity. 2 residues coordinate S-adenosyl-L-methionine: aspartate 259 and arginine 297.

It belongs to the class I-like SAM-binding methyltransferase superfamily. Cation-independent O-methyltransferase family.

The catalysed reaction is demethylspheroidene + S-adenosyl-L-methionine = spheroidene + S-adenosyl-L-homocysteine + H(+). Its pathway is carotenoid biosynthesis; spheroidene biosynthesis. In terms of biological role, methyltransferase that mediates the O-methylation of 1-hydroxy carotenoids. Converts hydroxyneurosporene to methoxyneurosporene or demethylspheroidene to spheroidene. Also able to produce spirilloxanthin. The polypeptide is Demethylspheroidene O-methyltransferase (crtF) (Rhodobacter capsulatus (strain ATCC BAA-309 / NBRC 16581 / SB1003)).